The following is a 493-amino-acid chain: MSFKDLRSFISHLEECGELKRVSYPVDPYLEMTEIADRVLRAGGPALLFEQPKGHSMPVLANLFGTPKRVAMALGKEDPLALRDVGELLAFLKEPEPPRGFKDAIAKIPMFKQALNMPPKTVSRAPCQEVVMTGDDVDLTKLPIQHCWPGDVAPLVTWGLTITKGPRQKRQNLGIYRQQLLGKNKLIMRWLSHRGGALDFRDFQEKHPGENYPVVVALGSDPVTILGAVTPVPDSMSEYAFAGLLRGERTEVVKALSCDLEVPATSEIILEGYIAPGEMAEEGPYGDHTGYYNETDSFPVFTVTHISHRKDAIYHSTYTGRPPDEPAMLGVALNEVFVPILRKQYPEIVDFYLPPEGCSYRMAVISIRKQYPGHAKRVMMGAWSFLRQFMYTKFIVVVDEDVNCRDWQDVIWAITTRMDPTRDTVMIDNTPIDYLDFASPVAGLGSKMGLDATNKWEGETNREWGTPIVMDEAVKRRVDDIWDELGIEQSPTL.

N172 serves as a coordination point for Mn(2+). Residues 175–177 (IYR), 189–191 (RWL), and 194–195 (RG) contribute to the prenylated FMN site. E238 is a Mn(2+) binding site. Residue D287 is the Proton donor of the active site.

Belongs to the UbiD family. Homohexamer. Requires prenylated FMN as cofactor. The cofactor is Mn(2+).

The protein localises to the cell membrane. The catalysed reaction is a 4-hydroxy-3-(all-trans-polyprenyl)benzoate + H(+) = a 2-(all-trans-polyprenyl)phenol + CO2. It functions in the pathway cofactor biosynthesis; ubiquinone biosynthesis. Its function is as follows. Catalyzes the decarboxylation of 3-octaprenyl-4-hydroxy benzoate to 2-octaprenylphenol, an intermediate step in ubiquinone biosynthesis. This Shewanella amazonensis (strain ATCC BAA-1098 / SB2B) protein is 3-octaprenyl-4-hydroxybenzoate carboxy-lyase.